The sequence spans 236 residues: Phosphoribosylaminoimidazole-succinocarboxamide synthase (236 aa).

Belongs to the SAICAR synthetase family.

It carries out the reaction 5-amino-1-(5-phospho-D-ribosyl)imidazole-4-carboxylate + L-aspartate + ATP = (2S)-2-[5-amino-1-(5-phospho-beta-D-ribosyl)imidazole-4-carboxamido]succinate + ADP + phosphate + 2 H(+). It functions in the pathway purine metabolism; IMP biosynthesis via de novo pathway; 5-amino-1-(5-phospho-D-ribosyl)imidazole-4-carboxamide from 5-amino-1-(5-phospho-D-ribosyl)imidazole-4-carboxylate: step 1/2. This is Phosphoribosylaminoimidazole-succinocarboxamide synthase from Akkermansia muciniphila (strain ATCC BAA-835 / DSM 22959 / JCM 33894 / BCRC 81048 / CCUG 64013 / CIP 107961 / Muc).